The chain runs to 101 residues: Small ribosomal subunit protein uS10 (101 aa).

It belongs to the universal ribosomal protein uS10 family. As to quaternary structure, part of the 30S ribosomal subunit.

Involved in the binding of tRNA to the ribosomes. In Corynebacterium urealyticum (strain ATCC 43042 / DSM 7109), this protein is Small ribosomal subunit protein uS10.